We begin with the raw amino-acid sequence, 69 residues long: Beta-defensin 114 (69 aa).

Positions 1 to 26 are cleaved as a signal peptide; sequence MRIFYYLHFLCYVTFILPATCTLVNA. 3 cysteine pairs are disulfide-bonded: C29–C57, C36–C50, and C40–C58.

Belongs to the beta-defensin family. In terms of tissue distribution, expressed in epididymis, predominantly in the caput (at protein level).

The protein resides in the secreted. Its function is as follows. Has a salt-sensitive antimicrobial activity against Gram-negative bacteria, including E.coli, Gram-positive, including S.aureus, and fungi, including C.albicans. Binds to and neutralizes bacterial lipopolysaccharides (LPS), abolishing TNF production by macrophages challenged with LPS. Rescues the LPS-induced reduction of sperm motility in vitro and may protect from LPS-induced lethality. The sequence is that of Beta-defensin 114 (DEFB114) from Homo sapiens (Human).